The following is a 363-amino-acid chain: tRNA N6-adenosine threonylcarbamoyltransferase (363 aa).

Residues histidine 121 and histidine 125 each contribute to the Fe cation site. Substrate is bound by residues 143–147 (LASGG), aspartate 176, glycine 189, and asparagine 287. Residue aspartate 315 participates in Fe cation binding.

Belongs to the KAE1 / TsaD family. Fe(2+) is required as a cofactor.

The protein localises to the cytoplasm. It carries out the reaction L-threonylcarbamoyladenylate + adenosine(37) in tRNA = N(6)-L-threonylcarbamoyladenosine(37) in tRNA + AMP + H(+). Its function is as follows. Required for the formation of a threonylcarbamoyl group on adenosine at position 37 (t(6)A37) in tRNAs that read codons beginning with adenine. Is involved in the transfer of the threonylcarbamoyl moiety of threonylcarbamoyl-AMP (TC-AMP) to the N6 group of A37, together with TsaE and TsaB. TsaD likely plays a direct catalytic role in this reaction. The polypeptide is tRNA N6-adenosine threonylcarbamoyltransferase (Rhodopseudomonas palustris (strain HaA2)).